A 907-amino-acid chain; its full sequence is Protein translocase subunit SecA (907 aa).

ATP is bound by residues Q87, 105-109 (GEGKT), and D512. Residues 834-907 (QEDVERMEEQ…KKYKQCHGKI (74 aa)) are disordered. Basic and acidic residues-rich tracts occupy residues 836-853 (DVER…EAAR) and 873-888 (EEAH…KVGR). Residues C892, C894, C903, and H904 each contribute to the Zn(2+) site. Positions 898 to 907 (KKYKQCHGKI) are enriched in basic residues.

Belongs to the SecA family. In terms of assembly, monomer and homodimer. Part of the essential Sec protein translocation apparatus which comprises SecA, SecYEG and auxiliary proteins SecDF-YajC and YidC. The cofactor is Zn(2+).

The protein localises to the cell inner membrane. The protein resides in the cytoplasm. It catalyses the reaction ATP + H2O + cellular proteinSide 1 = ADP + phosphate + cellular proteinSide 2.. Functionally, part of the Sec protein translocase complex. Interacts with the SecYEG preprotein conducting channel. Has a central role in coupling the hydrolysis of ATP to the transfer of proteins into and across the cell membrane, serving both as a receptor for the preprotein-SecB complex and as an ATP-driven molecular motor driving the stepwise translocation of polypeptide chains across the membrane. The chain is Protein translocase subunit SecA from Aliivibrio fischeri (strain ATCC 700601 / ES114) (Vibrio fischeri).